Here is a 138-residue protein sequence, read N- to C-terminus: Putative pre-16S rRNA nuclease (138 aa).

It belongs to the YqgF nuclease family.

It localises to the cytoplasm. In terms of biological role, could be a nuclease involved in processing of the 5'-end of pre-16S rRNA. This Fusobacterium nucleatum subsp. nucleatum (strain ATCC 25586 / DSM 15643 / BCRC 10681 / CIP 101130 / JCM 8532 / KCTC 2640 / LMG 13131 / VPI 4355) protein is Putative pre-16S rRNA nuclease.